Reading from the N-terminus, the 307-residue chain is MGNHNINAEEIALYDRQIRLWGFNAQQALKQSRVLLITASPLANEIAKNLVLSGIGKLCVLDSMTVYEKDVEEQFFIEASDIGQLRANVFKKKLHELNPLVEIDTDTSLISEIDEGKISKFSMVIATQLDYEEFCRINELTRICNASFYATSCFGLYGFAFCDLINHNFAIDRVVDNTKVEEDMFIVQKPMKEAFQSILGETLKPRLAKKIPTLYPAMLSLLKSKKSDPDSIRQVCIEQKLNEKTVLNGEFLSKFSSNISFQWTPVMSVVGGVVSQDALNSISKKQFPIDNFWIFDAESGLAPIYRL.

In terms of biological role, could be involved in a ubiquitin-related process important for DNA damage tolerance. Acts in a process which is defective in the checkpoint rad mutants and which involves hus5. This is DNA damage tolerance protein rad31 (rad31) from Schizosaccharomyces pombe (strain 972 / ATCC 24843) (Fission yeast).